The chain runs to 532 residues: Optineurin (532 aa).

Coiled-coil stretches lie at residues 27–143 (SMKN…LKLG) and 195–466 (EEVA…EEMM). A CCHC NOA-type zinc finger spans residues 502–532 (QPSITVYTCPKCNLTVPDMDTLQIHVMDCIT). Zn(2+)-binding residues include Cys510, Cys513, His526, and Cys530.

Its subcellular location is the cytoplasm. The protein localises to the perinuclear region. The protein resides in the golgi apparatus. It localises to the trans-Golgi network. It is found in the cytoplasmic vesicle. Its subcellular location is the recycling endosome. The protein localises to the autophagosome. Its function is as follows. Probably part of the TNF-alpha signaling pathway that can shift the equilibrium toward induction of cell death. May act by regulating membrane trafficking and cellular morphogenesis. In Xenopus laevis (African clawed frog), this protein is Optineurin (optn).